A 460-amino-acid polypeptide reads, in one-letter code: Phosphoenolpyruvate carboxylase (460 aa).

It belongs to the PEPCase type 2 family. Homotetramer. It depends on Mg(2+) as a cofactor.

It carries out the reaction oxaloacetate + phosphate = phosphoenolpyruvate + hydrogencarbonate. Functionally, catalyzes the irreversible beta-carboxylation of phosphoenolpyruvate (PEP) to form oxaloacetate (OAA), a four-carbon dicarboxylic acid source for the tricarboxylic acid cycle. The protein is Phosphoenolpyruvate carboxylase of Pyrobaculum aerophilum (strain ATCC 51768 / DSM 7523 / JCM 9630 / CIP 104966 / NBRC 100827 / IM2).